The following is a 660-amino-acid chain: CXXC-type zinc finger protein 1 (660 aa).

Position 1 is an N-acetylmethionine (Met1). The segment covering 1–14 has biased composition (acidic residues); that stretch reads MEGDGSDLEPPDAG. Positions 1–20 are disordered; it reads MEGDGSDLEPPDAGDDSKSE. 2 positions are modified to phosphoserine: Ser6 and Ser19. The PHD-type zinc-finger motif lies at 28–76; that stretch reads YCICRKPDINCFMIGCDNCNEWFHGDCIRITEKMAKAIREWYCRECREK. The span at 91-120 shows a compositional bias: basic and acidic residues; that stretch reads ERDGSERAGSEPRDEGGGRKRPASDPELQR. Positions 91–166 are disordered; that stretch reads ERDGSERAGS…QQQQQQQQQI (76 aa). Position 124 is a phosphoserine (Ser124). The CXXC-type zinc finger occupies 164-213; the sequence is QQIKRSARMCGECEACRRTEDCGHCDFCRDMKKFGGPNKIRQKCRLRQCQ. Positions 173, 176, 179, 185, 188, 191, 207, and 212 each coordinate Zn(2+). 2 disordered regions span residues 223–287 and 328–375; these read FPSS…SDED and AVKV…DPAS. Residue Ser228 is modified to Phosphoserine. Thr231 bears the Phosphothreonine mark. Lys254 participates in a covalent cross-link: Glycyl lysine isopeptide (Lys-Gly) (interchain with G-Cter in SUMO2). Residues 328-338 are compositionally biased toward basic residues; the sequence is AVKVKHVKRRE. Residues 339 to 349 show a composition bias toward basic and acidic residues; that stretch reads KKSEKKKEERY. The span at 350-362 shows a compositional bias: basic residues; sequence KRHRQKQKHKDKW. Over residues 363-372 the composition is skewed to basic and acidic residues; it reads KHPERADAKD. The stretch at 426-479 forms a coiled coil; it reads AEEHGKKLLERIRREQQSARTRLQEMERRFHELEAIILRAKQQAVREDEENNEN.

As to quaternary structure, component of the SET1 complex, at least composed of the catalytic subunit (SETD1A or SETD1B), WDR5, WDR82, RBBP5, ASH2L/ASH2, CXXC1/CFP1, HCFC1 and DPY30. Interacts with SETD1A. Interacts with ZNF335. Interacts with PRDM9; this interaction does not link PRDM9-activated recombination hotspot sites with DSB machinery and is not required for the hotspot recognition pathway. Interacts with histone H3K4me3. As to expression, expressed in seminiferous tubules and in both germ cells and Sertoli cells. Highly expressed in spermatogonia, weakly expressed in leptonema and zygonema, and then again high expression in pachynema and diplonema, decreasing to undetectable levels in spermatids.

It localises to the nucleus speckle. Its subcellular location is the nucleus. Transcriptional activator that exhibits a unique DNA binding specificity for CpG unmethylated motifs with a preference for CpGG. This is CXXC-type zinc finger protein 1 (Cxxc1) from Mus musculus (Mouse).